Here is a 375-residue protein sequence, read N- to C-terminus: Phosphoglycerate kinase (375 aa).

(2R)-3-phosphoglycerate is bound by residues V1, D2, F3, N4, R17, S40, H41, G43, R44, L99, R100, H147, and R148. G191 serves as a coordination point for ADP. Residue G191 participates in CDP binding. AMP is bound by residues A192 and K193. A192 contributes to the ATP binding site. Residue A192 participates in Mg(2+) binding. D196 contacts CDP. D196 serves as a coordination point for Mg(2+). K197 is an AMP binding site. K197 is an ATP binding site. Position 215 (G215) interacts with ADP. G215 serves as a coordination point for CDP. AMP contacts are provided by G216 and G290. Residues G216 and G290 each coordinate ATP. CDP is bound by residues G315 and F320. Position 320 (F320) interacts with ADP. AMP is bound at residue E321. ATP contacts are provided by E321, D352, and T353. Mg(2+) is bound at residue D352.

Belongs to the phosphoglycerate kinase family. As to quaternary structure, monomer. Mg(2+) is required as a cofactor.

The catalysed reaction is (2R)-3-phosphoglycerate + ATP = (2R)-3-phospho-glyceroyl phosphate + ADP. It functions in the pathway carbohydrate degradation; glycolysis; pyruvate from D-glyceraldehyde 3-phosphate: step 2/5. The sequence is that of Phosphoglycerate kinase (PGK) from Tetrahymena pyriformis.